Consider the following 182-residue polypeptide: Protein Syd (182 aa).

It belongs to the Syd family.

Its subcellular location is the cell inner membrane. In terms of biological role, interacts with the SecY protein in vivo. May bind preferentially to an uncomplexed state of SecY, thus functioning either as a chelating agent for excess SecY in the cell or as a regulatory factor that negatively controls the translocase function. In Aliivibrio salmonicida (strain LFI1238) (Vibrio salmonicida (strain LFI1238)), this protein is Protein Syd.